The sequence spans 123 residues: uncharacterized protein (123 aa).

Positions 1 to 20 (MARTLALRASAGLVAGMAMA) are cleaved as a signal peptide.

This is an uncharacterized protein from Mycobacterium bovis (strain ATCC BAA-935 / AF2122/97).